Reading from the N-terminus, the 753-residue chain is Synaptotagmin-like protein 5 (753 aa).

Residues 7-123 enclose the RabBD domain; that stretch reads FINLSFLLDH…IISGEWFLEE (117 aa). An FYVE-type zinc finger spans residues 64-106; the sequence is CVHCHKTLGLIFDRGDPCQACSLRVCSECRVTGLDGSWKCTVC. 3 disordered regions span residues 145–279, 297–359, and 380–404; these read RRSP…SREH, LTKS…LNSL, and LASGLSTNSQAGSDRKRSYLNVPDA. Position 147 is a phosphoserine (Ser-147). Residues 150–174 are compositionally biased toward polar residues; it reads SEETQNQEQAQQCVDKSDTLSSVRQ. A compositionally biased stretch (basic and acidic residues) spans 195–206; sequence TRGEIRTPKPES. Residues 214-223 show a composition bias toward polar residues; it reads LDSQNLQSFK. Positions 224 to 237 are enriched in low complexity; sequence SASGSDRGSTTSSD. The segment covering 249 to 275 has biased composition (polar residues); sequence KSSYSNGGIPVTQRSPVPSAHSVTSIN. The span at 380–391 shows a compositional bias: polar residues; the sequence is LASGLSTNSQAG. C2 domains are found at residues 429-550 and 597-717; these read VTGE…DEWF and KRGK…VDWM.

In terms of assembly, binds RAB27A that has been activated by GTP-binding.

Its subcellular location is the membrane. Its function is as follows. May act as Rab effector protein and play a role in vesicle trafficking. Binds phospholipids. The polypeptide is Synaptotagmin-like protein 5 (Sytl5) (Mus musculus (Mouse)).